The chain runs to 203 residues: GTP cyclohydrolase 1 (203 aa).

The Zn(2+) site is built by C87, H90, and C158.

The protein belongs to the GTP cyclohydrolase I family. Toroid-shaped homodecamer, composed of two pentamers of five dimers.

The catalysed reaction is GTP + H2O = 7,8-dihydroneopterin 3'-triphosphate + formate + H(+). It participates in cofactor biosynthesis; 7,8-dihydroneopterin triphosphate biosynthesis; 7,8-dihydroneopterin triphosphate from GTP: step 1/1. This is GTP cyclohydrolase 1 from Xylella fastidiosa (strain 9a5c).